Consider the following 115-residue polypeptide: Somatostatin-1 (115 aa).

A signal peptide spans 1–24; it reads MQSCRVQCALTLLSLALAINSISA. Positions 25–99 are excised as a propeptide; that stretch reads APTDPRLRQF…NSSPALAPRE (75 aa). A disordered region spans residues 60–79; sequence SQTDNEALESDDLPRGAEQD. Cysteine 104 and cysteine 115 are joined by a disulfide.

The protein belongs to the somatostatin family.

The protein resides in the secreted. Functionally, somatostatin inhibits the release of somatotropin. The protein is Somatostatin-1 (sst1) of Pelophylax ridibundus (Marsh frog).